A 416-amino-acid polypeptide reads, in one-letter code: Glutamyl-tRNA reductase (416 aa).

Substrate contacts are provided by residues 51 to 54, Ser110, 115 to 117, and Gln121; these read TCNR and EPQ. Residue Cys52 is the Nucleophile of the active site. 190–195 is an NADP(+) binding site; that stretch reads GAGQTG.

The protein belongs to the glutamyl-tRNA reductase family. In terms of assembly, homodimer.

It catalyses the reaction (S)-4-amino-5-oxopentanoate + tRNA(Glu) + NADP(+) = L-glutamyl-tRNA(Glu) + NADPH + H(+). It participates in porphyrin-containing compound metabolism; protoporphyrin-IX biosynthesis; 5-aminolevulinate from L-glutamyl-tRNA(Glu): step 1/2. Its function is as follows. Catalyzes the NADPH-dependent reduction of glutamyl-tRNA(Glu) to glutamate 1-semialdehyde (GSA). This is Glutamyl-tRNA reductase from Francisella tularensis subsp. tularensis (strain FSC 198).